The chain runs to 307 residues: Upstream stimulatory factor 1 (307 aa).

2 disordered regions span residues 104–131 (DDNG…SVGG) and 168–207 (QGGS…VERR). Low complexity predominate over residues 122–131 (PTDSSTSVGG). Residues 187–207 (DGPRTTRDDKRRAQHNEVERR) are compositionally biased toward basic and acidic residues. The bHLH domain occupies 196-251 (KRRAQHNEVERRRRDKINNWIVQLSKIIPDCSMESTKTGQSKGGILSKACDYIQEL). A leucine-zipper region spans residues 268–289 (LQMDNEVLRQQVEDLKNNNLTL).

In terms of assembly, efficient DNA binding requires dimerization with another bHLH protein. Binds DNA as a homodimer or a heterodimer. Oocyte and somatic tissue. Oocytic and somatic forms of this protein exist, probably as a result of post-translational modifications or minor splicing differences.

The protein resides in the nucleus. May act as a regulator of transcription factor IIIA (TFIIIA) gene expression. The protein is Upstream stimulatory factor 1 (usf1) of Xenopus borealis (Kenyan clawed frog).